The chain runs to 205 residues: Small ribosomal subunit protein uS4 (205 aa).

Residues 18–49 (NIWGRPKSPVNKREYGPGQHGQRRKGKLSDFG) are disordered. Positions 94–157 (RRLDAIVYRA…KQLALVLEAN (64 aa)) constitute an S4 RNA-binding domain.

Belongs to the universal ribosomal protein uS4 family. Part of the 30S ribosomal subunit. Contacts protein S5. The interaction surface between S4 and S5 is involved in control of translational fidelity.

In terms of biological role, one of the primary rRNA binding proteins, it binds directly to 16S rRNA where it nucleates assembly of the body of the 30S subunit. Its function is as follows. With S5 and S12 plays an important role in translational accuracy. This Afipia carboxidovorans (strain ATCC 49405 / DSM 1227 / KCTC 32145 / OM5) (Oligotropha carboxidovorans) protein is Small ribosomal subunit protein uS4.